Here is a 292-residue protein sequence, read N- to C-terminus: Protein/nucleic acid deglycase HchA (292 aa).

A compositionally biased stretch (polar residues) spans 1–12 (MSQDVNELSKQP). The tract at residues 1–23 (MSQDVNELSKQPTPDKAEDNAFF) is disordered. Residue Cys-190 is the Nucleophile of the active site.

The protein belongs to the peptidase C56 family. HchA subfamily.

The protein localises to the cytoplasm. The enzyme catalyses N(omega)-(1-hydroxy-2-oxopropyl)-L-arginyl-[protein] + H2O = lactate + L-arginyl-[protein] + H(+). The catalysed reaction is N(6)-(1-hydroxy-2-oxopropyl)-L-lysyl-[protein] + H2O = lactate + L-lysyl-[protein] + H(+). It carries out the reaction S-(1-hydroxy-2-oxopropyl)-L-cysteinyl-[protein] + H2O = lactate + L-cysteinyl-[protein] + H(+). It catalyses the reaction N(omega)-(1-hydroxy-2-oxoethyl)-L-arginyl-[protein] + H2O = L-arginyl-[protein] + glycolate + H(+). The enzyme catalyses N(6)-(1-hydroxy-2-oxoethyl)-L-lysyl-[protein] + H2O = glycolate + L-lysyl-[protein] + H(+). The catalysed reaction is S-(1-hydroxy-2-oxoethyl)-L-cysteinyl-[protein] + H2O = glycolate + L-cysteinyl-[protein] + H(+). It carries out the reaction N(2)-(1-hydroxy-2-oxopropyl)-dGTP + H2O = lactate + dGTP + H(+). It catalyses the reaction N(2)-(1-hydroxy-2-oxopropyl)-GTP + H2O = lactate + GTP + H(+). The enzyme catalyses N(2)-(1-hydroxy-2-oxopropyl)-GDP + H2O = lactate + GDP + H(+). The catalysed reaction is N(2)-(1-hydroxy-2-oxopropyl)-GMP + H2O = lactate + GMP + H(+). It carries out the reaction N(2)-(1-hydroxy-2-oxoethyl)-dGTP + H2O = dGTP + glycolate + H(+). It catalyses the reaction N(2)-(1-hydroxy-2-oxoethyl)-GTP + H2O = glycolate + GTP + H(+). The enzyme catalyses N(2)-(1-hydroxy-2-oxoethyl)-GDP + H2O = glycolate + GDP + H(+). The catalysed reaction is N(2)-(1-hydroxy-2-oxoethyl)-GMP + H2O = glycolate + GMP + H(+). It carries out the reaction an N(2)-(1-hydroxy-2-oxopropyl)-guanosine in RNA + H2O = a guanosine in RNA + lactate + H(+). It catalyses the reaction an N(2)-(1-hydroxy-2-oxopropyl)-2'-deoxyguanosine in DNA + H2O = a 2'-deoxyguanosine in DNA + lactate + H(+). The enzyme catalyses an N(2)-(1-hydroxy-2-oxoethyl)-guanosine in RNA + H2O = a guanosine in RNA + glycolate + H(+). The catalysed reaction is an N(2)-(1-hydroxy-2-oxoethyl)-2'-deoxyguanosine in DNA + H2O = a 2'-deoxyguanosine in DNA + glycolate + H(+). Its function is as follows. Protein and nucleotide deglycase that catalyzes the deglycation of the Maillard adducts formed between amino groups of proteins or nucleotides and reactive carbonyl groups of glyoxals. Thus, functions as a protein deglycase that repairs methylglyoxal- and glyoxal-glycated proteins, and releases repaired proteins and lactate or glycolate, respectively. Deglycates cysteine, arginine and lysine residues in proteins, and thus reactivates these proteins by reversing glycation by glyoxals. Acts on early glycation intermediates (hemithioacetals and aminocarbinols), preventing the formation of Schiff bases and advanced glycation endproducts (AGE). Also functions as a nucleotide deglycase able to repair glycated guanine in the free nucleotide pool (GTP, GDP, GMP, dGTP) and in DNA and RNA. Is thus involved in a major nucleotide repair system named guanine glycation repair (GG repair), dedicated to reversing methylglyoxal and glyoxal damage via nucleotide sanitization and direct nucleic acid repair. Plays an important role in protecting cells from carbonyl stress. The protein is Protein/nucleic acid deglycase HchA of Staphylococcus aureus (strain Newman).